The primary structure comprises 711 residues: Putative DNA topoisomerase 3 (711 aa).

Positions 2–135 (KYLILAEKPS…LRRLWISSVT (134 aa)) constitute a Toprim domain. Mg(2+) contacts are provided by Glu-8 and Asp-104. The region spanning 152 to 580 (YNDLYYAALA…EMKGFTKDVV (429 aa)) is the Topo IA-type catalytic domain. The interval 186-191 (SLGRVQ) is interaction with DNA. Residue Tyr-305 is the O-(5'-phospho-DNA)-tyrosine intermediate of the active site. The interval 691–711 (MNKNEGLDNNPFKDALKNLNL) is disordered.

It belongs to the type IA topoisomerase family. The cofactor is Mg(2+).

The enzyme catalyses ATP-independent breakage of single-stranded DNA, followed by passage and rejoining.. Its function is as follows. Releases the supercoiling and torsional tension of DNA, which is introduced during the DNA replication and transcription, by transiently cleaving and rejoining one strand of the DNA duplex. Introduces a single-strand break via transesterification at a target site in duplex DNA. The scissile phosphodiester is attacked by the catalytic tyrosine of the enzyme, resulting in the formation of a DNA-(5'-phosphotyrosyl)-enzyme intermediate and the expulsion of a 3'-OH DNA strand. The free DNA strand then undergoes passage around the unbroken strand, thus removing DNA supercoils. Finally, in the religation step, the DNA 3'-OH attacks the covalent intermediate to expel the active-site tyrosine and restore the DNA phosphodiester backbone. In Staphylococcus aureus (strain bovine RF122 / ET3-1), this protein is Putative DNA topoisomerase 3.